The following is a 254-amino-acid chain: 3-deoxy-manno-octulosonate cytidylyltransferase (254 aa).

It belongs to the KdsB family.

It is found in the cytoplasm. It carries out the reaction 3-deoxy-alpha-D-manno-oct-2-ulosonate + CTP = CMP-3-deoxy-beta-D-manno-octulosonate + diphosphate. It functions in the pathway nucleotide-sugar biosynthesis; CMP-3-deoxy-D-manno-octulosonate biosynthesis; CMP-3-deoxy-D-manno-octulosonate from 3-deoxy-D-manno-octulosonate and CTP: step 1/1. The protein operates within bacterial outer membrane biogenesis; lipopolysaccharide biosynthesis. Activates KDO (a required 8-carbon sugar) for incorporation into bacterial lipopolysaccharide in Gram-negative bacteria. The chain is 3-deoxy-manno-octulosonate cytidylyltransferase from Chlamydia caviae (strain ATCC VR-813 / DSM 19441 / 03DC25 / GPIC) (Chlamydophila caviae).